The chain runs to 188 residues: Cytochrome c oxidase assembly protein CtaG (188 aa).

At 1–8 (MSKKSNKN) the chain is on the cytoplasmic side. Residues 9–31 (LAFSLLGLIISMVLLSFASVPIY) form a helical; Signal-anchor for type II membrane protein membrane-spanning segment. Residues 32 to 188 (NLFCKVTGYG…SSLRGNYVSN (157 aa)) lie on the Periplasmic side of the membrane.

This sequence belongs to the COX11/CtaG family.

The protein localises to the cell inner membrane. Functionally, exerts its effect at some terminal stage of cytochrome c oxidase synthesis, probably by being involved in the insertion of the copper B into subunit I. The polypeptide is Cytochrome c oxidase assembly protein CtaG (Rickettsia conorii (strain ATCC VR-613 / Malish 7)).